Consider the following 366-residue polypeptide: Cell division protein FtsY homolog, chloroplastic (366 aa).

The N-terminal 40 residues, 1 to 40, are a transit peptide targeting the chloroplast; that stretch reads MATSSAHLSFLAGRISPFSSERIGLFPLRGEFRPRMTRFR. GTP-binding positions include 171–178, 254–258, and 318–321; these read GVNGGGKT, DTSGR, and TKLD.

Belongs to the GTP-binding SRP family. In terms of assembly, monomer. Interacts with FFC/cpSRP54, a component of the cpSRP complex, composed of a FFC/cpSRP54 monomer and a CAO/cpSRP43 dimer. The complex with FFC/cpSRP54 is formed when both proteins are bound with GTP. As to expression, expressed in green tissues. Low levels in roots and seeds.

Its subcellular location is the plastid. The protein resides in the chloroplast stroma. The protein localises to the chloroplast thylakoid membrane. In terms of biological role, signal recognition particle receptor protein. Binds GTP specifically. The GTPase activity is inhibited by the N-terminus of the protein until binding to the thylakoid membrane. Activates the GTPase activity of FFC/cpSRP54 when bound to the cpSRP complex. Required for light-harvesting chlorophyll a/b-binding protein (LHCP) integration into thylakoids. Might be also functionally linked to the Sec translocation machinery. The polypeptide is Cell division protein FtsY homolog, chloroplastic (CPFTSY) (Arabidopsis thaliana (Mouse-ear cress)).